The following is a 245-amino-acid chain: Protein DEHYDRATION-INDUCED 19 homolog 4 (245 aa).

It belongs to the Di19 family.

The polypeptide is Protein DEHYDRATION-INDUCED 19 homolog 4 (DI19-4) (Oryza sativa subsp. japonica (Rice)).